We begin with the raw amino-acid sequence, 169 residues long: Thaumatin-like pathogenesis-related protein 4 (169 aa).

A signal peptide spans 1-21 (MATSSTVLFLLLAVFAASASA).

Belongs to the thaumatin family.

In terms of biological role, associated with resistance against stem rust fungi. The protein is Thaumatin-like pathogenesis-related protein 4 (RASTL-4) of Avena sativa (Oat).